Reading from the N-terminus, the 205-residue chain is Holliday junction branch migration complex subunit RuvA (205 aa).

A domain I region spans residues 1 to 64 (MIGRLKGILV…EDAQLLYGFI (64 aa)). A domain II region spans residues 65–143 (HKEERSLFRL…SLMEASMGAE (79 aa)). A flexible linker region spans residues 144 to 156 (REFVLKSNFTPAP). The tract at residues 157–205 (VAATVEEDAIAALLSLGYKPQQASKAVSSAFQEGMDPEQLIKAALKSML) is domain III.

It belongs to the RuvA family. In terms of assembly, homotetramer. Forms an RuvA(8)-RuvB(12)-Holliday junction (HJ) complex. HJ DNA is sandwiched between 2 RuvA tetramers; dsDNA enters through RuvA and exits via RuvB. An RuvB hexamer assembles on each DNA strand where it exits the tetramer. Each RuvB hexamer is contacted by two RuvA subunits (via domain III) on 2 adjacent RuvB subunits; this complex drives branch migration. In the full resolvosome a probable DNA-RuvA(4)-RuvB(12)-RuvC(2) complex forms which resolves the HJ.

The protein resides in the cytoplasm. Functionally, the RuvA-RuvB-RuvC complex processes Holliday junction (HJ) DNA during genetic recombination and DNA repair, while the RuvA-RuvB complex plays an important role in the rescue of blocked DNA replication forks via replication fork reversal (RFR). RuvA specifically binds to HJ cruciform DNA, conferring on it an open structure. The RuvB hexamer acts as an ATP-dependent pump, pulling dsDNA into and through the RuvAB complex. HJ branch migration allows RuvC to scan DNA until it finds its consensus sequence, where it cleaves and resolves the cruciform DNA. The polypeptide is Holliday junction branch migration complex subunit RuvA (Shewanella amazonensis (strain ATCC BAA-1098 / SB2B)).